Here is a 474-residue protein sequence, read N- to C-terminus: Trehalose-6-phosphate synthase (474 aa).

Arg-10 contributes to the D-glucose 6-phosphate binding site. Residue 22–23 participates in UDP-alpha-D-glucose binding; that stretch reads GG. D-glucose 6-phosphate is bound by residues Tyr-77 and Asp-131. 2 residues coordinate UDP-alpha-D-glucose: Arg-263 and Lys-268. A D-glucose 6-phosphate-binding site is contributed by Arg-301. UDP-alpha-D-glucose-binding positions include Phe-340 and 366–370; that span reads LVAKE.

The protein belongs to the glycosyltransferase 20 family. Homotetramer.

It carries out the reaction D-glucose 6-phosphate + UDP-alpha-D-glucose = alpha,alpha-trehalose 6-phosphate + UDP + H(+). Its pathway is glycan biosynthesis; trehalose biosynthesis. Probably involved in the osmoprotection via the biosynthesis of trehalose. Catalyzes the transfer of glucose from UDP-alpha-D-glucose (UDP-Glc) to D-glucose 6-phosphate (Glc-6-P) to form trehalose-6-phosphate. Acts with retention of the anomeric configuration of the UDP-sugar donor. The chain is Trehalose-6-phosphate synthase from Klebsiella pneumoniae subsp. pneumoniae (strain ATCC 700721 / MGH 78578).